The chain runs to 657 residues: Protein PSK SIMULATOR 1 (657 aa).

Composition is skewed to polar residues over residues 1-15 (MGGL…NNAP), 26-39 (HLNN…SHSG), 62-76 (ESFS…SHPQ), and 540-556 (RSPN…SHNP). 2 disordered regions span residues 1–80 (MGGL…NIED) and 534–559 (PVKS…PSMG). A lipid anchor (N-myristoyl glycine) is attached at Gly2.

It is found in the nucleus. Its function is as follows. Promotes seedling growth probably via the regulation of phytosulfokine (PSK) signaling; PSK are peptide phytohormones acting as growth factors. Together with PSI2 and PSI3, required during vegetative growth and reproduction. May also have a function in carbohydrate metabolism. The chain is Protein PSK SIMULATOR 1 from Arabidopsis thaliana (Mouse-ear cress).